A 216-amino-acid polypeptide reads, in one-letter code: MASTWFFLLALLAVSISNAFASDPSQLQDFCVADKMSQVLVNGFACKDPAAITVEDFFFSGLHMAGNTSNRQGSAVTGVNVAQISGLNTLGISLARVDYAPYGLNPPHIHPRATEILTILEGSLYVGFVTSNPENKLFTKVLNKGDVFVFPQGLIHFQFNYGTKDVIALAALSSQNPGVITIANAVFGSKPFISDDILAKAFQVEKKIVDRIQAQF.

An N-terminal signal peptide occupies residues 1–21 (MASTWFFLLALLAVSISNAFA). Residues Cys31 and Cys46 are joined by a disulfide bond. The region spanning 60–210 (SGLHMAGNTS…AFQVEKKIVD (151 aa)) is the Cupin type-1 domain. Asn67 carries an N-linked (GlcNAc...) asparagine glycan. Mn(2+) is bound by residues His108, His110, Glu115, and His156.

This sequence belongs to the germin family. Oligomer (believed to be a pentamer but probably hexamer).

It localises to the secreted. Its subcellular location is the extracellular space. The protein localises to the apoplast. In terms of biological role, may play a role in plant defense. Probably has no oxalate oxidase activity even if the active site is conserved. The polypeptide is Putative germin-like protein 2-1 (Oryza sativa subsp. japonica (Rice)).